The sequence spans 156 residues: Cytochrome c-type biogenesis protein CcmE 1 (156 aa).

The Cytoplasmic segment spans residues 1–8 (MNATRKQR). A helical; Signal-anchor for type II membrane protein transmembrane segment spans residues 9–29 (LWLVIGVLAAAALAVTLIVFA). Residues 30–156 (LQRNMSYLFT…ATVAPLTAPR (127 aa)) are Periplasmic-facing. 2 residues coordinate heme: histidine 123 and tyrosine 127.

It belongs to the CcmE/CycJ family.

It localises to the cell inner membrane. In terms of biological role, heme chaperone required for the biogenesis of c-type cytochromes. Transiently binds heme delivered by CcmC and transfers the heme to apo-cytochromes in a process facilitated by CcmF and CcmH. The polypeptide is Cytochrome c-type biogenesis protein CcmE 1 (Xanthomonas axonopodis pv. citri (strain 306)).